Consider the following 178-residue polypeptide: Mediator of RNA polymerase II transcription subunit 30 (178 aa).

A disordered region spans residues 1-22 (MSTPPLAPTGMASGPFGGPQAQ). An N-acetylserine modification is found at serine 2. A coiled-coil region spans residues 134 to 173 (FASEERREIVEVNKKLKQKNQQLKQIMDQLRNLIWDINAM).

This sequence belongs to the Mediator complex subunit 30 family. Component of the Mediator complex, which is composed of MED1, MED4, MED6, MED7, MED8, MED9, MED10, MED11, MED12, MED13, MED13L, MED14, MED15, MED16, MED17, MED18, MED19, MED20, MED21, MED22, MED23, MED24, MED25, MED26, MED27, MED29, MED30, MED31, CCNC, CDK8 and CDC2L6/CDK11. The MED12, MED13, CCNC and CDK8 subunits form a distinct module termed the CDK8 module. Mediator containing the CDK8 module is less active than Mediator lacking this module in supporting transcriptional activation. Individual preparations of the Mediator complex lacking one or more distinct subunits have been variously termed ARC, CRSP, DRIP, PC2, SMCC and TRAP.

The protein resides in the nucleus. In terms of biological role, component of the Mediator complex, a coactivator involved in the regulated transcription of nearly all RNA polymerase II-dependent genes. Mediator functions as a bridge to convey information from gene-specific regulatory proteins to the basal RNA polymerase II transcription machinery. Mediator is recruited to promoters by direct interactions with regulatory proteins and serves as a scaffold for the assembly of a functional preinitiation complex with RNA polymerase II and the general transcription factors. This chain is Mediator of RNA polymerase II transcription subunit 30 (Med30), found in Mus musculus (Mouse).